Consider the following 65-residue polypeptide: Gallinacin-1 alpha (65 aa).

An N-terminal signal peptide occupies residues 1 to 19 (MRIVYLLLPFILLLAQGAA). The propeptide occupies 20-25 (GSSQAL). 3 cysteine pairs are disulfide-bonded: cysteine 31–cysteine 59, cysteine 38–cysteine 53, and cysteine 43–cysteine 60.

Belongs to the beta-defensin family.

It is found in the secreted. The protein localises to the cytoplasmic granule. Has bactericidal activity. Potent activity against E.coli ML-35, L.monocytogenes EGD and C.albicans. The chain is Gallinacin-1 alpha from Gallus gallus (Chicken).